A 55-amino-acid chain; its full sequence is COP9 signalosome complex subunit 3 (55 aa).

The PCI domain occupies 1–52; sequence KSIQGLSASPGDLSALHGKEAEMHVLQMIQDGQIHALINQKDGMVRFLEDPE.

The protein belongs to the CSN3 family. Component of the CSN complex, probably composed of CSN1, CSN2, CSN3, CSN4, CSN5 (CSN5A or CSN5B), CSN6 (CSN6A or CSN6B), CSN7 and CSN8.

The protein resides in the cytoplasm. It localises to the nucleus. Its function is as follows. Component of the COP9 signalosome complex (CSN), a complex involved in various cellular and developmental processes such as photomorphogenesis and auxin and jasmonate responses. The CSN complex is an essential regulator of the ubiquitin (Ubl) conjugation pathway by mediating the deneddylation of the cullin subunits of SCF-type E3 ligase complexes, leading to decrease the Ubl ligase activity of SCF. It is involved in repression of photomorphogenesis in darkness by regulating the activity of COP1-containing Ubl ligase complexes. The sequence is that of COP9 signalosome complex subunit 3 (CSN3) from Brassica oleracea (Wild cabbage).